Here is a 408-residue protein sequence, read N- to C-terminus: Ribosomal RNA large subunit methyltransferase DR_0049 (408 aa).

The protein belongs to the methyltransferase superfamily.

The enzyme catalyses cytidine(2499) in 23S rRNA + S-adenosyl-L-methionine = 5-methylcytidine(2499) in 23S rRNA + S-adenosyl-L-homocysteine + H(+). In terms of biological role, specifically methylates the cytosine at position 2499 (m5C2499) of 23S rRNA. This chain is Ribosomal RNA large subunit methyltransferase DR_0049, found in Deinococcus radiodurans (strain ATCC 13939 / DSM 20539 / JCM 16871 / CCUG 27074 / LMG 4051 / NBRC 15346 / NCIMB 9279 / VKM B-1422 / R1).